Here is a 391-residue protein sequence, read N- to C-terminus: Protein NirF (391 aa).

It is found in the cytoplasm. Required for the biosynthesis of heme d1 of nitrite reductase. Could have a dehydrogenase activity yielding sirohydrochlorin from precorrin-2 or dehydrogenation of propionate side chain C17. This Stutzerimonas stutzeri (Pseudomonas stutzeri) protein is Protein NirF (nirF).